Here is a 156-residue protein sequence, read N- to C-terminus: ATP synthase subunit b (156 aa).

The helical transmembrane segment at 7–29 threads the bilayer; it reads LIAQAISFAILIWFTTKFVWPYL.

This sequence belongs to the ATPase B chain family. F-type ATPases have 2 components, F(1) - the catalytic core - and F(0) - the membrane proton channel. F(1) has five subunits: alpha(3), beta(3), gamma(1), delta(1), epsilon(1). F(0) has three main subunits: a(1), b(2) and c(10-14). The alpha and beta chains form an alternating ring which encloses part of the gamma chain. F(1) is attached to F(0) by a central stalk formed by the gamma and epsilon chains, while a peripheral stalk is formed by the delta and b chains.

It is found in the cell inner membrane. Its function is as follows. F(1)F(0) ATP synthase produces ATP from ADP in the presence of a proton or sodium gradient. F-type ATPases consist of two structural domains, F(1) containing the extramembraneous catalytic core and F(0) containing the membrane proton channel, linked together by a central stalk and a peripheral stalk. During catalysis, ATP synthesis in the catalytic domain of F(1) is coupled via a rotary mechanism of the central stalk subunits to proton translocation. In terms of biological role, component of the F(0) channel, it forms part of the peripheral stalk, linking F(1) to F(0). This Methylobacillus flagellatus (strain ATCC 51484 / DSM 6875 / VKM B-1610 / KT) protein is ATP synthase subunit b.